An 84-amino-acid polypeptide reads, in one-letter code: Large ribosomal subunit protein bL31B (84 aa).

The protein belongs to the bacterial ribosomal protein bL31 family. Type B subfamily. In terms of assembly, part of the 50S ribosomal subunit.

This is Large ribosomal subunit protein bL31B from Parabacteroides distasonis (strain ATCC 8503 / DSM 20701 / CIP 104284 / JCM 5825 / NCTC 11152).